A 418-amino-acid polypeptide reads, in one-letter code: Odorant receptor 13a (418 aa).

The Cytoplasmic portion of the chain corresponds to 1-38 (MFYSYPYKALSFPIQCVWLKLNGSWPLTESSRPWRSQS). Residues 39-59 (LLATAYIVWAWYVIASVGITI) traverse the membrane as a helical segment. The Extracellular portion of the chain corresponds to 60 to 70 (SYQTAFLLNNL). Asn-69 is a glycosylation site (N-linked (GlcNAc...) asparagine). Residues 71-91 (SDIIITTENCCTTFMGVLNFV) form a helical membrane-spanning segment. The Cytoplasmic segment spans residues 92–140 (RLIHLRLNQRKFRQLIENFSYEIWIPNSSKNNVAAECRRRMVTFSIMTS). The helical transmembrane segment at 141-161 (LLACLIIMYCVLPLVEIFFGP) threads the bilayer. At 162–195 (AFDAQNKPFPYKMIFPYDAQSSWIRYVMTYIFTS) the chain is on the extracellular side. A helical transmembrane segment spans residues 196-216 (YAGICVVTTLFAEDTILGFFI). Residues 217–273 (TYTCGQFHLLHQRIAGLFAGSNAELAESIQLERLKRIVEKHNNIISFAKRLEDFFNP) lie on the Cytoplasmic side of the membrane. A helical membrane pass occupies residues 274-294 (ILLANLMISSVLICMVGFQIV). Residues 295-299 (TGKNM) lie on the Extracellular side of the membrane. The chain crosses the membrane as a helical span at residues 300 to 320 (FIGDYVKFIIYISSALSQLYV). At 321–385 (LCENGDALIK…PVRITAFKFS (65 aa)) the chain is on the cytoplasmic side. A helical membrane pass occupies residues 386–406 (TLSLQSFTAILSTSISYFTLL). The Extracellular portion of the chain corresponds to 407-418 (RSVYFDDEKKLD).

The protein belongs to the insect chemoreceptor superfamily. Heteromeric odorant receptor channel (TC 1.A.69) family. Or1a subfamily. Interacts with Orco. Complexes exist early in the endomembrane system in olfactory sensory neurons (OSNs), coupling these complexes to the conserved ciliary trafficking pathway. In terms of tissue distribution, expressed in olfactory sensory neurons in the antenna.

It localises to the cell membrane. Functionally, odorant receptor which mediates acceptance or avoidance behavior, depending on its substrates. The odorant receptor repertoire encodes a large collection of odor stimuli that vary widely in identity, intensity, and duration. May form a complex with Orco to form odorant-sensing units, providing sensitive and prolonged odorant signaling and calcium permeability. Involved in the behavioral responses to octanol, nonanol, and pentyl acetate. The protein is Odorant receptor 13a (Or13a) of Drosophila melanogaster (Fruit fly).